We begin with the raw amino-acid sequence, 314 residues long: Thymidylate synthase (314 aa).

Residues R21 and 176 to 177 (RR) each bind dUMP. Catalysis depends on C196, which acts as the Nucleophile. Residues 216–219 (RSAD), N227, and 257–259 (HLY) each bind dUMP. (6R)-5,10-methylene-5,6,7,8-tetrahydrofolate is bound at residue D219. S313 contributes to the (6R)-5,10-methylene-5,6,7,8-tetrahydrofolate binding site.

The protein belongs to the thymidylate synthase family. Bacterial-type ThyA subfamily. Homodimer.

Its subcellular location is the cytoplasm. The catalysed reaction is dUMP + (6R)-5,10-methylene-5,6,7,8-tetrahydrofolate = 7,8-dihydrofolate + dTMP. It functions in the pathway pyrimidine metabolism; dTTP biosynthesis. Functionally, catalyzes the reductive methylation of 2'-deoxyuridine-5'-monophosphate (dUMP) to 2'-deoxythymidine-5'-monophosphate (dTMP) while utilizing 5,10-methylenetetrahydrofolate (mTHF) as the methyl donor and reductant in the reaction, yielding dihydrofolate (DHF) as a by-product. This enzymatic reaction provides an intracellular de novo source of dTMP, an essential precursor for DNA biosynthesis. This is Thymidylate synthase from Listeria monocytogenes serotype 4a (strain HCC23).